A 177-amino-acid chain; its full sequence is Bifunctional protein PyrR (177 aa).

The short motif at 101-113 is the PRPP-binding element; sequence IILIDDVLYTGRT.

It belongs to the purine/pyrimidine phosphoribosyltransferase family. PyrR subfamily.

It catalyses the reaction UMP + diphosphate = 5-phospho-alpha-D-ribose 1-diphosphate + uracil. Functionally, regulates the transcription of the pyrimidine nucleotide (pyr) operon in response to exogenous pyrimidines. Also displays a weak uracil phosphoribosyltransferase activity which is not physiologically significant. This is Bifunctional protein PyrR from Endomicrobium trichonymphae.